The primary structure comprises 107 residues: Guanylin (107 aa).

An N-terminal signal peptide occupies residues 1–20 (MNTFLLSALCLGAWAALVGA). The propeptide occupies 21–92 (VTVQDGDFSF…LNRLAVIAQD (72 aa)). Cystine bridges form between C61–C74, C96–C104, and C99–C107.

Belongs to the guanylin family.

Its subcellular location is the secreted. Functionally, endogenous activator of intestinal guanylate cyclase. It stimulates this enzyme through the same receptor binding region as the heat-stable enterotoxins. The protein is Guanylin (GUCA2A) of Cavia porcellus (Guinea pig).